Here is a 341-residue protein sequence, read N- to C-terminus: Ribosomal RNA small subunit methyltransferase H (341 aa).

Residues 47-49, D64, F91, D109, and Q116 each bind S-adenosyl-L-methionine; that span reads GGY.

Belongs to the methyltransferase superfamily. RsmH family.

The protein localises to the cytoplasm. It carries out the reaction cytidine(1402) in 16S rRNA + S-adenosyl-L-methionine = N(4)-methylcytidine(1402) in 16S rRNA + S-adenosyl-L-homocysteine + H(+). Specifically methylates the N4 position of cytidine in position 1402 (C1402) of 16S rRNA. This chain is Ribosomal RNA small subunit methyltransferase H, found in Rhizobium rhizogenes (strain K84 / ATCC BAA-868) (Agrobacterium radiobacter).